Here is a 214-residue protein sequence, read N- to C-terminus: 3,4-dihydroxy-2-butanone 4-phosphate synthase (214 aa).

D-ribulose 5-phosphate contacts are provided by residues 40–41 (RE), Asp-45, 153–157 (RRGHT), and Glu-177. Residue Glu-41 coordinates Mg(2+). Residue His-156 participates in Mg(2+) binding.

It belongs to the DHBP synthase family. Homodimer. Mg(2+) serves as cofactor. Mn(2+) is required as a cofactor.

It carries out the reaction D-ribulose 5-phosphate = (2S)-2-hydroxy-3-oxobutyl phosphate + formate + H(+). It participates in cofactor biosynthesis; riboflavin biosynthesis; 2-hydroxy-3-oxobutyl phosphate from D-ribulose 5-phosphate: step 1/1. In terms of biological role, catalyzes the conversion of D-ribulose 5-phosphate to formate and 3,4-dihydroxy-2-butanone 4-phosphate. The protein is 3,4-dihydroxy-2-butanone 4-phosphate synthase of Rhodospirillum rubrum (strain ATCC 11170 / ATH 1.1.1 / DSM 467 / LMG 4362 / NCIMB 8255 / S1).